The following is a 105-amino-acid chain: Putative membrane protein insertion efficiency factor (105 aa).

The protein belongs to the UPF0161 family.

It localises to the cell membrane. Could be involved in insertion of integral membrane proteins into the membrane. In Bifidobacterium longum (strain NCC 2705), this protein is Putative membrane protein insertion efficiency factor.